The sequence spans 351 residues: Putative NBPF family member NBPF5 (351 aa).

2 coiled-coil regions span residues 10-43 (SERAEMNILEINQELRSQLAESNQQFRDLKEKFL) and 69-115 (DSVL…KLRE). The tract at residues 157–285 (HLVHKLSPEN…VPPRHHDKSN (129 aa)) is disordered. Over residues 165–179 (ENDEDEDEDEDDKDE) the composition is skewed to acidic residues. An Olduvai domain is found at 174–261 (EDDKDEEVEK…EEEEALNIPP (88 aa)). A compositionally biased stretch (basic and acidic residues) spans 192–202 (EVQKTEEKEVP). The span at 214–226 (SNSHNPSNSNQPH) shows a compositional bias: low complexity. 2 stretches are compositionally biased toward basic and acidic residues: residues 232–251 (TFKEHEVDSALVVESEHPHD) and 264–273 (QNDHEEEEGK).

Belongs to the NBPF family. Expressed in brain and medulla.

Its subcellular location is the cytoplasm. The polypeptide is Putative NBPF family member NBPF5 (Homo sapiens (Human)).